We begin with the raw amino-acid sequence, 524 residues long: Acetyl-CoA decarbonylase/synthase complex subunit beta (524 aa).

The [Ni-Fe-S] cluster site is built by Cys212, Cys215, Cys301, and Cys303. A disordered region spans residues Trp436–Gln466. Acidic residues predominate over residues Val437–Ala452. The segment covering Ala453–Gln466 has biased composition (low complexity).

It belongs to the CdhC family. As to quaternary structure, monomer. The ACDS complex is made up of alpha, epsilon, beta, gamma and delta chains with a probable stoichiometry of (alpha(2)epsilon(2))(4)-beta(8)-(gamma(1)delta(1))(8). [Ni-Fe-S] cluster is required as a cofactor.

It carries out the reaction Co(I)-[corrinoid Fe-S protein] + acetyl-CoA + H(+) = methyl-Co(III)-[corrinoid Fe-S protein] + CO + CoA. Functionally, part of a complex that catalyzes the reversible cleavage of acetyl-CoA, allowing autotrophic growth from CO(2). The alpha-epsilon complex generates CO from CO(2), while the beta subunit (this protein) combines the CO with CoA and a methyl group to form acetyl-CoA. The methyl group, which is incorporated into acetyl-CoA, is transferred to the beta subunit by a corrinoid iron-sulfur protein (the gamma-delta complex). The polypeptide is Acetyl-CoA decarbonylase/synthase complex subunit beta (Archaeoglobus fulgidus (strain ATCC 49558 / DSM 4304 / JCM 9628 / NBRC 100126 / VC-16)).